The primary structure comprises 461 residues: MKEFDTIAAVATPVGEGGISIIRISGDKSLDIVSSIFKGKNDRTLDDIKPYSMRYGFIIEKESKEMIDEVLVSYMKGPRSFTAEDTLEINCHGGVIPTKKILKELIKSGARLAEPGEFTKRAFLNGRIDLSQAEAVIDIIRSKTDLSMKSALKQAEGTLSKEINSIRNRMIKIIAHIEATVDYPEDDLEEITGQKIKVDLKEIINKIDNLISASEEGKILREGLNTVIVGKPNVGKSSLLNALINENKAIVTEIPGTTRDVIEEYINIDGIPTKIVDTAGIRETEDVVEKIGVEKSKEKIDEADLVIFMLDLSKKIDEEDIEIMDFIKNKKYIVLLNKLDLNKDLNEENHFIKELDSKYIIKTSVKNNSGLNELKECIKNLFFSGEIKSDELTVTNARHQEALIRSRESCIQAIETLSDEISIDLASIDIRNAWKYLGEITGDTLDENIIDKIFSEFCLGK.

Positions 23, 88, and 127 each coordinate (6S)-5-formyl-5,6,7,8-tetrahydrofolate. Positions 223-383 (GLNTVIVGKP…LKECIKNLFF (161 aa)) constitute a TrmE-type G domain. Position 233 (asparagine 233) interacts with K(+). GTP contacts are provided by residues 233–238 (NVGKSS), 252–258 (TEIPGTT), and 277–280 (DTAG). A Mg(2+)-binding site is contributed by serine 237. The K(+) site is built by threonine 252, isoleucine 254, and threonine 257. Threonine 258 contacts Mg(2+). Residue lysine 461 participates in (6S)-5-formyl-5,6,7,8-tetrahydrofolate binding.

The protein belongs to the TRAFAC class TrmE-Era-EngA-EngB-Septin-like GTPase superfamily. TrmE GTPase family. As to quaternary structure, homodimer. Heterotetramer of two MnmE and two MnmG subunits. K(+) serves as cofactor.

It localises to the cytoplasm. Exhibits a very high intrinsic GTPase hydrolysis rate. Involved in the addition of a carboxymethylaminomethyl (cmnm) group at the wobble position (U34) of certain tRNAs, forming tRNA-cmnm(5)s(2)U34. This chain is tRNA modification GTPase MnmE, found in Clostridium botulinum (strain Langeland / NCTC 10281 / Type F).